The following is a 238-amino-acid chain: Uridylate kinase (238 aa).

Lys12–Gly15 provides a ligand contact to ATP. A UMP-binding site is contributed by Gly54. 2 residues coordinate ATP: Gly55 and Arg59. Residues Asp74 and Thr135–Thr142 contribute to the UMP site. ATP contacts are provided by Thr162, Tyr168, and Asp171.

Belongs to the UMP kinase family. In terms of assembly, homohexamer.

The protein localises to the cytoplasm. It catalyses the reaction UMP + ATP = UDP + ADP. It participates in pyrimidine metabolism; CTP biosynthesis via de novo pathway; UDP from UMP (UMPK route): step 1/1. With respect to regulation, inhibited by UTP. Functionally, catalyzes the reversible phosphorylation of UMP to UDP. This is Uridylate kinase from Azoarcus sp. (strain BH72).